The primary structure comprises 110 residues: Single-stranded DNA-binding protein 1 (110 aa).

Residues 1–104 (MNKILLIGRM…VVGEEVQFLE (104 aa)) enclose the SSB domain.

In terms of assembly, homotetramer.

The protein is Single-stranded DNA-binding protein 1 (ssb1) of Clostridium acetobutylicum (strain ATCC 824 / DSM 792 / JCM 1419 / IAM 19013 / LMG 5710 / NBRC 13948 / NRRL B-527 / VKM B-1787 / 2291 / W).